A 716-amino-acid chain; its full sequence is Fatty acid oxidation complex subunit alpha (716 aa).

The tract at residues 1–189 (MIYQSPTIQV…KVGAIDAVVA (189 aa)) is enoyl-CoA hydratase/isomerase. Substrate is bound at residue D296. Residues 311-716 (KDVNQAAVLG…AANNGSYYQA (406 aa)) are 3-hydroxyacyl-CoA dehydrogenase. NAD(+) is bound by residues M324, D343, 400–402 (VVE), K407, and S429. H450 (for 3-hydroxyacyl-CoA dehydrogenase activity) is an active-site residue. N453 contacts NAD(+). Residues N500 and Y660 each contribute to the substrate site.

In the N-terminal section; belongs to the enoyl-CoA hydratase/isomerase family. The protein in the C-terminal section; belongs to the 3-hydroxyacyl-CoA dehydrogenase family. As to quaternary structure, heterotetramer of two alpha chains (FadB) and two beta chains (FadA).

It carries out the reaction a (3S)-3-hydroxyacyl-CoA + NAD(+) = a 3-oxoacyl-CoA + NADH + H(+). The catalysed reaction is a (3S)-3-hydroxyacyl-CoA = a (2E)-enoyl-CoA + H2O. It catalyses the reaction a 4-saturated-(3S)-3-hydroxyacyl-CoA = a (3E)-enoyl-CoA + H2O. The enzyme catalyses (3S)-3-hydroxybutanoyl-CoA = (3R)-3-hydroxybutanoyl-CoA. It carries out the reaction a (3Z)-enoyl-CoA = a 4-saturated (2E)-enoyl-CoA. The catalysed reaction is a (3E)-enoyl-CoA = a 4-saturated (2E)-enoyl-CoA. It participates in lipid metabolism; fatty acid beta-oxidation. Its function is as follows. Involved in the aerobic and anaerobic degradation of long-chain fatty acids via beta-oxidation cycle. Catalyzes the formation of 3-oxoacyl-CoA from enoyl-CoA via L-3-hydroxyacyl-CoA. It can also use D-3-hydroxyacyl-CoA and cis-3-enoyl-CoA as substrate. This is Fatty acid oxidation complex subunit alpha from Shewanella frigidimarina (strain NCIMB 400).